The primary structure comprises 356 residues: Putative methylthioribose-1-phosphate isomerase (356 aa).

Substrate contacts are provided by residues R57–A59, R100, and Q206. Residue D247 is the Proton donor of the active site. N257 to K258 is a binding site for substrate.

It belongs to the eIF-2B alpha/beta/delta subunits family. MtnA subfamily.

The catalysed reaction is 5-(methylsulfanyl)-alpha-D-ribose 1-phosphate = 5-(methylsulfanyl)-D-ribulose 1-phosphate. Its function is as follows. Catalyzes the interconversion of methylthioribose-1-phosphate (MTR-1-P) into methylthioribulose-1-phosphate (MTRu-1-P). This Pyrococcus abyssi (strain GE5 / Orsay) protein is Putative methylthioribose-1-phosphate isomerase (aIF-2BI).